The primary structure comprises 428 residues: Serine--tRNA ligase (428 aa).

231–233 (TAE) is a binding site for L-serine. ATP is bound at residue 262 to 264 (RSE). Position 285 (glutamate 285) interacts with L-serine. 349 to 352 (EISS) contributes to the ATP binding site. An L-serine-binding site is contributed by serine 385.

It belongs to the class-II aminoacyl-tRNA synthetase family. Type-1 seryl-tRNA synthetase subfamily. Homodimer. The tRNA molecule binds across the dimer.

It localises to the cytoplasm. The catalysed reaction is tRNA(Ser) + L-serine + ATP = L-seryl-tRNA(Ser) + AMP + diphosphate + H(+). It catalyses the reaction tRNA(Sec) + L-serine + ATP = L-seryl-tRNA(Sec) + AMP + diphosphate + H(+). It functions in the pathway aminoacyl-tRNA biosynthesis; selenocysteinyl-tRNA(Sec) biosynthesis; L-seryl-tRNA(Sec) from L-serine and tRNA(Sec): step 1/1. In terms of biological role, catalyzes the attachment of serine to tRNA(Ser). Is also able to aminoacylate tRNA(Sec) with serine, to form the misacylated tRNA L-seryl-tRNA(Sec), which will be further converted into selenocysteinyl-tRNA(Sec). This chain is Serine--tRNA ligase, found in Staphylococcus haemolyticus (strain JCSC1435).